The chain runs to 260 residues: Cytochrome c oxidase subunit 3 (260 aa).

Topologically, residues 1–15 are mitochondrial matrix; it reads MAHQAHAYHMVDPSP. Residues 16 to 34 form a helical membrane-spanning segment; sequence WPLTGAVAALLLTSGLAMW. Residues 35 to 40 are Mitochondrial intermembrane-facing; it reads FHFGSM. Residues 41–66 form a helical membrane-spanning segment; it reads ILLTLGLITMVLTMIQWWRDVIREGT. Topologically, residues 67–72 are mitochondrial matrix; that stretch reads FQGHHT. A helical transmembrane segment spans residues 73 to 105; the sequence is PPVQKGLRYGMILFITSEVFFFIGFFWAFYNSS. Residues 106–128 lie on the Mitochondrial intermembrane side of the membrane; that stretch reads LAPTYELGECWPPTGITPLNPFE. The helical transmembrane segment at 129–152 threads the bilayer; sequence VPLLNTAVLLASGVTVTWAHHSIM. The Mitochondrial matrix segment spans residues 153–155; the sequence is HGD. The chain crosses the membrane as a helical span at residues 156–183; the sequence is RKEAIQSLTLTILLGLYFTALQAMEYYE. The Mitochondrial intermembrane portion of the chain corresponds to 184–190; the sequence is APFTIAD. The helical transmembrane segment at 191–223 threads the bilayer; it reads GVYGSTFFVATGFHGLHVIIGSLFLSVCLLRQI. Over 224–232 the chain is Mitochondrial matrix; that stretch reads QYHFTSKHH. Residues 233-255 traverse the membrane as a helical segment; it reads FGFEAAWYWHFVDVVWLFLYVSI. The Mitochondrial intermembrane portion of the chain corresponds to 256 to 260; that stretch reads YWWGS.

Belongs to the cytochrome c oxidase subunit 3 family. As to quaternary structure, component of the cytochrome c oxidase (complex IV, CIV), a multisubunit enzyme composed of 14 subunits. The complex is composed of a catalytic core of 3 subunits MT-CO1, MT-CO2 and MT-CO3, encoded in the mitochondrial DNA, and 11 supernumerary subunits COX4I, COX5A, COX5B, COX6A, COX6B, COX6C, COX7A, COX7B, COX7C, COX8 and NDUFA4, which are encoded in the nuclear genome. The complex exists as a monomer or a dimer and forms supercomplexes (SCs) in the inner mitochondrial membrane with NADH-ubiquinone oxidoreductase (complex I, CI) and ubiquinol-cytochrome c oxidoreductase (cytochrome b-c1 complex, complex III, CIII), resulting in different assemblies (supercomplex SCI(1)III(2)IV(1) and megacomplex MCI(2)III(2)IV(2)).

It localises to the mitochondrion inner membrane. It carries out the reaction 4 Fe(II)-[cytochrome c] + O2 + 8 H(+)(in) = 4 Fe(III)-[cytochrome c] + 2 H2O + 4 H(+)(out). Its function is as follows. Component of the cytochrome c oxidase, the last enzyme in the mitochondrial electron transport chain which drives oxidative phosphorylation. The respiratory chain contains 3 multisubunit complexes succinate dehydrogenase (complex II, CII), ubiquinol-cytochrome c oxidoreductase (cytochrome b-c1 complex, complex III, CIII) and cytochrome c oxidase (complex IV, CIV), that cooperate to transfer electrons derived from NADH and succinate to molecular oxygen, creating an electrochemical gradient over the inner membrane that drives transmembrane transport and the ATP synthase. Cytochrome c oxidase is the component of the respiratory chain that catalyzes the reduction of oxygen to water. Electrons originating from reduced cytochrome c in the intermembrane space (IMS) are transferred via the dinuclear copper A center (CU(A)) of subunit 2 and heme A of subunit 1 to the active site in subunit 1, a binuclear center (BNC) formed by heme A3 and copper B (CU(B)). The BNC reduces molecular oxygen to 2 water molecules using 4 electrons from cytochrome c in the IMS and 4 protons from the mitochondrial matrix. This is Cytochrome c oxidase subunit 3 (mt-co3) from Xenopus laevis (African clawed frog).